The sequence spans 619 residues: E3 ubiquitin-protein ligase DTX4 (619 aa).

WWE domains are found at residues 1-78 (MLLA…PVRR) and 79-155 (NYYD…RVRR). Disordered stretches follow at residues 238–281 (KPLD…PGPN) and 358–389 (PPPV…KGKT). The segment covering 261-273 (QASSMPTGTTMGS) has biased composition (polar residues). The segment covering 378-387 (KTTKKQAKKG) has biased composition (basic residues). An RING-type; atypical zinc finger spans residues 409 to 468 (CTICMERLTAPSGYKGPQPTVKPDLVGKLSRCGHVYHIYCLVAMYNNGNKDGSLQCPTCK).

This sequence belongs to the Deltex family. Interacts with NLRP4.

The protein localises to the cytoplasm. The catalysed reaction is S-ubiquitinyl-[E2 ubiquitin-conjugating enzyme]-L-cysteine + [acceptor protein]-L-lysine = [E2 ubiquitin-conjugating enzyme]-L-cysteine + N(6)-ubiquitinyl-[acceptor protein]-L-lysine.. The protein operates within protein modification; protein ubiquitination. In terms of biological role, regulator of Notch signaling, a signaling pathway involved in cell-cell communications that regulates a broad spectrum of cell-fate determinations. Functions as a ubiquitin ligase protein in vivo, mediating 'Lys48'-linked polyubiquitination and promoting degradation of TBK1, targeting to TBK1 requires interaction with NLRP4. The polypeptide is E3 ubiquitin-protein ligase DTX4 (DTX4) (Homo sapiens (Human)).